A 174-amino-acid polypeptide reads, in one-letter code: Extracellular cysteine protease (174 aa).

Catalysis depends on residues cysteine 24, histidine 120, and asparagine 141.

This sequence belongs to the peptidase C47 family. Post-translationally, proteolytically cleaved.

The protein localises to the secreted. The protein resides in the cell wall. Inhibited by heavy metal ions such as Zn(2+) or Ni(2+), iodoacetamide, N-ethylmaleimide, leupeptin, SDS and E-64. Also inhibited by chloromethylketones TPCK and TLCK and by human plasma inhibitor alpha-2-macroglobulin. Stimulated by L-cysteine. Cysteine protease able to cleave elastin, insulin, myoglobin, fibronectin, fibrinogen, HMW-kininogen, alpha-1-protease inhibitor and alpha-1-antitrypsin. Along with other extracellular proteases may contribute to the colonization and infection of human tissues. In Staphylococcus epidermidis, this protein is Extracellular cysteine protease (ecpA).